The sequence spans 421 residues: E3 ubiquitin-protein ligase MARCHF4 (421 aa).

The signal sequence occupies residues 1–16 (MLLAIGVIVWCWGLLS). Residues 60–79 (ELNAEGNATSSATESHSLAN) are disordered. A compositionally biased stretch (polar residues) spans 65 to 77 (GNATSSATESHSL). The RING-CH-type zinc finger occupies 135–195 (DSGVRTPLCR…ELCYYKYQVI (61 aa)). 8 residues coordinate Zn(2+): cysteine 143, cysteine 146, cysteine 159, cysteine 161, histidine 169, cysteine 172, cysteine 185, and cysteine 188. The next 2 membrane-spanning stretches (helical) occupy residues 218 to 238 (IAAA…LVWS) and 252 to 272 (LFQI…ALIV). 2 disordered regions span residues 319–385 (PLTH…LPDH) and 401–421 (QEPR…VTTV). 2 stretches are compositionally biased toward polar residues: residues 367–380 (TEPQ…NGQP) and 403–412 (PRGQTSNSNR).

The protein resides in the golgi apparatus membrane. The enzyme catalyses S-ubiquitinyl-[E2 ubiquitin-conjugating enzyme]-L-cysteine + [acceptor protein]-L-lysine = [E2 ubiquitin-conjugating enzyme]-L-cysteine + N(6)-ubiquitinyl-[acceptor protein]-L-lysine.. Its pathway is protein modification; protein ubiquitination. E3 ubiquitin-protein ligase. E3 ubiquitin ligases accept ubiquitin from an E2 ubiquitin-conjugating enzyme in the form of a thioester and then directly transfer the ubiquitin to targeted substrates. In Danio rerio (Zebrafish), this protein is E3 ubiquitin-protein ligase MARCHF4 (marchf4).